The chain runs to 190 residues: E3 ubiquitin-protein ligase RNF183 (190 aa).

Residues 1-159 (MSEPQGQELR…RECVRNPHFR (159 aa)) lie on the Cytoplasmic side of the membrane. Residues 13–60 (CPVCWNPFNNTFHTPKVLDCCHSFCVECLAHLSLVTPARRRLLCPLCR) form an RING-type zinc finger. Residues 160 to 180 (IFAYLMAVILSVTLLLIFSIF) form a helical; Anchor for type IV membrane protein membrane-spanning segment. Topologically, residues 181-190 (WTKQFFWGMG) are lumenal.

Interacts with FATE1. Interacts with SEC16A. Interacts with BCL2L1. Autoubiquitinated (in vitro). As to expression, highly expressed in the kidney and testis.

It localises to the endoplasmic reticulum membrane. The protein localises to the endoplasmic reticulum. It is found in the golgi apparatus. The protein resides in the cis-Golgi network membrane. Its subcellular location is the lysosome membrane. It catalyses the reaction S-ubiquitinyl-[E2 ubiquitin-conjugating enzyme]-L-cysteine + [acceptor protein]-L-lysine = [E2 ubiquitin-conjugating enzyme]-L-cysteine + N(6)-ubiquitinyl-[acceptor protein]-L-lysine.. The protein operates within protein modification; protein ubiquitination. Functionally, acts as an E3 ubiquitin ligase catalyzing the covalent attachment of ubiquitin moieties onto substrate proteins. Triggers apoptosis in response to prolonged ER stress by mediating the polyubiquitination and subsequent proteasomal degradation of BCL2L1. May collaborate with FATE1 to restrain BIK protein levels thus regulating apoptotic signaling. This chain is E3 ubiquitin-protein ligase RNF183 (Rnf183), found in Mus musculus (Mouse).